A 686-amino-acid chain; its full sequence is Methionine--tRNA ligase (686 aa).

A 'HIGH' region motif is present at residues 22-32 (PYANGPIHLGH). 4 residues coordinate Zn(2+): cysteine 153, cysteine 156, cysteine 166, and cysteine 169. The 'KMSKS' region motif lies at 337-341 (KMSKS). Lysine 340 is an ATP binding site. Residues 547 to 573 (MLEDSKESTPAPAAAKPKKAATQKADA) form a disordered region. The tRNA-binding domain maps to 584–686 (DFLKVKLRVA…SGAEPGMEVR (103 aa)).

This sequence belongs to the class-I aminoacyl-tRNA synthetase family. MetG type 1 subfamily. As to quaternary structure, homodimer. Zn(2+) is required as a cofactor.

Its subcellular location is the cytoplasm. The enzyme catalyses tRNA(Met) + L-methionine + ATP = L-methionyl-tRNA(Met) + AMP + diphosphate. Is required not only for elongation of protein synthesis but also for the initiation of all mRNA translation through initiator tRNA(fMet) aminoacylation. This chain is Methionine--tRNA ligase, found in Alcanivorax borkumensis (strain ATCC 700651 / DSM 11573 / NCIMB 13689 / SK2).